Consider the following 382-residue polypeptide: Biotin synthase (382 aa).

One can recognise a Radical SAM core domain in the interval 83-318; the sequence is CCGNVVDLCS…EQILRYAGGR (236 aa). Residues Cys101, Cys105, and Cys108 each contribute to the [4Fe-4S] cluster site. Residues Cys146, Cys183, Cys243, and Arg313 each coordinate [2Fe-2S] cluster.

This sequence belongs to the radical SAM superfamily. Biotin synthase family. In terms of assembly, homodimer. [4Fe-4S] cluster serves as cofactor. Requires [2Fe-2S] cluster as cofactor.

The enzyme catalyses (4R,5S)-dethiobiotin + (sulfur carrier)-SH + 2 reduced [2Fe-2S]-[ferredoxin] + 2 S-adenosyl-L-methionine = (sulfur carrier)-H + biotin + 2 5'-deoxyadenosine + 2 L-methionine + 2 oxidized [2Fe-2S]-[ferredoxin]. Its pathway is cofactor biosynthesis; biotin biosynthesis; biotin from 7,8-diaminononanoate: step 2/2. Catalyzes the conversion of dethiobiotin (DTB) to biotin by the insertion of a sulfur atom into dethiobiotin via a radical-based mechanism. This chain is Biotin synthase, found in Crocosphaera subtropica (strain ATCC 51142 / BH68) (Cyanothece sp. (strain ATCC 51142)).